We begin with the raw amino-acid sequence, 365 residues long: MDRAIQSPGKYVQGADALQRLGDYLKPLADSWLVIADKFVLGFAEDTIRQSLSKAGLAMDIVAFNGECSQGEVDRLCQLATQNGRSAIVGIGGGKTLDTAKAVAFFQKVPVAVAPTIASTDAPCSALSVLYTDEGEFDRYLMLPTNPALVVVDTAIVARAPARLLAAGIGDALATWFEARAASRSSAATMAGGPATQTALNLARFCYDTLLEEGEKAMLAVQAQVVTPALERIVEANTYLSGVGFESGGVAAAHAVHNGLTAVAETHHFYHGEKVAFGVLVQLALENASNAEMQEVMSLCHAVGLPITLAQLDITEDIPTKMRAVAELACAPGETIHNMPGGVTVEQVYGALLVADQLGQHFLEF.

Asp37, Gly94, Lys95, Thr116, and Ser119 together coordinate NAD(+). Residue Asp121 participates in glycerol binding. NAD(+)-binding residues include Ser125, Leu127, and Tyr131. The Zn(2+) site is built by Asp171, His254, and His271. His254 contacts glycerol.

The protein belongs to the iron-containing alcohol dehydrogenase family. Zn(2+) serves as cofactor.

It carries out the reaction glycerol + NAD(+) = dihydroxyacetone + NADH + H(+). It functions in the pathway polyol metabolism; glycerol fermentation; glycerone phosphate from glycerol (oxidative route): step 1/2. In terms of biological role, catalyzes the NAD-dependent oxidation of glycerol to dihydroxyacetone (glycerone). Allows microorganisms to utilize glycerol as a source of carbon under anaerobic conditions. The chain is Glycerol dehydrogenase (gldA) from Pseudomonas putida (Arthrobacter siderocapsulatus).